A 429-amino-acid chain; its full sequence is Gamma-glutamyl phosphate reductase (429 aa).

The protein belongs to the gamma-glutamyl phosphate reductase family.

The protein resides in the cytoplasm. It catalyses the reaction L-glutamate 5-semialdehyde + phosphate + NADP(+) = L-glutamyl 5-phosphate + NADPH + H(+). It functions in the pathway amino-acid biosynthesis; L-proline biosynthesis; L-glutamate 5-semialdehyde from L-glutamate: step 2/2. Its function is as follows. Catalyzes the NADPH-dependent reduction of L-glutamate 5-phosphate into L-glutamate 5-semialdehyde and phosphate. The product spontaneously undergoes cyclization to form 1-pyrroline-5-carboxylate. This Methylibium petroleiphilum (strain ATCC BAA-1232 / LMG 22953 / PM1) protein is Gamma-glutamyl phosphate reductase.